Reading from the N-terminus, the 66-residue chain is Defensin-B1 (66 aa).

The N-terminal stretch at 1–23 (MNAHVLLLCTILFLLVHTPPVLG) is a signal peptide. Cystine bridges form between Cys29/Cys56, Cys36/Cys50, and Cys40/Cys57. The propeptide occupies 61–66 (VLMEDG).

It belongs to the beta-defensin family. In terms of tissue distribution, expressed at low levels in kidney, lung, and spleen.

It localises to the secreted. Its function is as follows. Has bactericidal activity. May act as a ligand for C-C chemokine receptor CCR6. Positively regulates the sperm motility and bactericidal activity in a CCR6-dependent manner. Binds to CCR6 and triggers Ca2+ mobilization in the sperm which is important for its motility. This Ornithorhynchus anatinus (Duckbill platypus) protein is Defensin-B1.